A 738-amino-acid polypeptide reads, in one-letter code: Catalase-peroxidase (738 aa).

Residues 1–13 show a composition bias toward gly residues; the sequence is MDGQDIGAGGGCP. The segment at 1-26 is disordered; sequence MDGQDIGAGGGCPFSGANTNKGRRSN. A cross-link (tryptophyl-tyrosyl-methioninium (Trp-Tyr) (with M-252)) is located at residues 98-226; it reads WHSAGTYRTA…LAAVQMGLIY (129 aa). Residue histidine 99 is the Proton acceptor of the active site. Positions 226–252 form a cross-link, tryptophyl-tyrosyl-methioninium (Tyr-Met) (with W-98); sequence YVNPEGPDGNPDPIASGRDIRETFARM. Position 267 (histidine 267) interacts with heme b.

The protein belongs to the peroxidase family. Peroxidase/catalase subfamily. Homodimer or homotetramer. Heme b is required as a cofactor. Post-translationally, formation of the three residue Trp-Tyr-Met cross-link is important for the catalase, but not the peroxidase activity of the enzyme.

It catalyses the reaction H2O2 + AH2 = A + 2 H2O. It carries out the reaction 2 H2O2 = O2 + 2 H2O. In terms of biological role, bifunctional enzyme with both catalase and broad-spectrum peroxidase activity. This is Catalase-peroxidase from Ruegeria sp. (strain TM1040) (Silicibacter sp.).